We begin with the raw amino-acid sequence, 485 residues long: Noelin (485 aa).

The signal sequence occupies residues 1–24 (MSVPLLKIGVVLSTMAMITNWMSQ). N-linked (GlcNAc...) asparagine glycosylation is found at N33, N103, N187, N288, N307, N394, N431, and N473. Positions 87 to 225 (RDARTKQLRQ…ERLRACMQKL (139 aa)) form a coiled coil. The region spanning 226-478 (ACGKLTGISD…QTLYNVTLFH (253 aa)) is the Olfactomedin-like domain. Residues C227 and C409 are joined by a disulfide bond.

In terms of assembly, homotetramer; disulfide-linked. Dimer of dimers, giving rise to a V-shaped homotretramer. Isoform 1 and isoform 3 interact with RTN4R. Identified in a complex with RTN4R and LINGO1. Peripherally associated with AMPAR complex. AMPAR complex consists of an inner core made of 4 pore-forming GluA/GRIA proteins (GRIA1, GRIA2, GRIA3 and GRIA4) and 4 major auxiliary subunits arranged in a twofold symmetry. One of the two pairs of distinct binding sites is occupied either by CNIH2, CNIH3 or CACNG2, CACNG3. The other harbors CACNG2, CACNG3, CACNG4, CACNG8 or GSG1L. This inner core of AMPAR complex is complemented by outer core constituents binding directly to the GluA/GRIA proteins at sites distinct from the interaction sites of the inner core constituents. Outer core constituents include at least PRRT1, PRRT2, CKAMP44/SHISA9, FRRS1L and NRN1. The proteins of the inner and outer core serve as a platform for other, more peripherally associated AMPAR constituents, including OLFM1. Alone or in combination, these auxiliary subunits control the gating and pharmacology of the AMPAR complex and profoundly impact their biogenesis and protein processing. Interacts with OLFM2. In terms of processing, in isoform 3 and isoform 4, the signal peptide is predicted to end in position 17. As to expression, expressed in the brain (at protein level). Expressed in the brain, predominantly in the cortex and hippocampus. In the pituitary only the two A-type and in the adrenal glands only the two B-type forms were detected.

It is found in the secreted. The protein resides in the synapse. Its subcellular location is the endoplasmic reticulum. The protein localises to the cell projection. It localises to the axon. It is found in the perikaryon. In terms of biological role, contributes to the regulation of axonal growth in the embryonic and adult central nervous system by inhibiting interactions between RTN4R and LINGO1. Inhibits RTN4R-mediated axon growth cone collapse. May play an important role in regulating the production of neural crest cells by the neural tube. May be required for normal responses to olfactory stimuli. This chain is Noelin (Olfm1), found in Rattus norvegicus (Rat).